Here is a 464-residue protein sequence, read N- to C-terminus: CD-NTase-associated protein 4 (464 aa).

Residues 1–228 form an N-terminal endonuclease domain region; it reads MSASLLEKQS…FENFICHALE (228 aa). The tract at residues 229–464 is C-terminal SAVED domain; that stretch reads EDRTQWLSDP…EYMPTAELNI (236 aa).

Belongs to the Cap4 nuclease family. As to quaternary structure, a monomer in the absence of cAAA, in its presence it forms oligomers.

Its activity is regulated as follows. DNase activity is activated upon ligand binding. Its function is as follows. Effector DNase of a CBASS antivirus system. CBASS (cyclic oligonucleotide-based antiphage signaling system) provides immunity against bacteriophage. The CD-NTase protein synthesizes cyclic nucleotides in response to infection; these serve as specific second messenger signals. The signals activate a diverse range of effectors, leading to bacterial cell death and thus abortive phage infection. A type II-C CBASS system. In terms of biological role, probably in the presence of its endogenous cyclic nucleotide (synthesized by the cognate CD-NTase protein in the CBASS operon), or of 2',3',3'-cyclic AMP-AMP-AMP (cAAA) synthesized by Acinetobacter sp. ATCC 27244, endonucleolytically degrades dsDNA in a non-sequence specific manner. It is not activated by other cyclic nucleotides. This Moraxella osloensis protein is CD-NTase-associated protein 4.